A 201-amino-acid chain; its full sequence is Recombination protein RecR (201 aa).

The segment at 57 to 72 (CQVCYSLSDNDICDIC) adopts a C4-type zinc-finger fold. Residues 80–177 (NKICIVESYP…RITRITYGIS (98 aa)) enclose the Toprim domain.

Belongs to the RecR family.

In terms of biological role, may play a role in DNA repair. It seems to be involved in an RecBC-independent recombinational process of DNA repair. It may act with RecF and RecO. The sequence is that of Recombination protein RecR from Brachyspira hyodysenteriae (strain ATCC 49526 / WA1).